The chain runs to 68 residues: Small ribosomal subunit protein bS21 (68 aa).

This sequence belongs to the bacterial ribosomal protein bS21 family.

In Dinoroseobacter shibae (strain DSM 16493 / NCIMB 14021 / DFL 12), this protein is Small ribosomal subunit protein bS21.